The following is a 3996-amino-acid chain: Probable E3 ubiquitin-protein ligase HECTD4 (3996 aa).

The helical transmembrane segment at 282–302 (TCIIRCILVVFQVVFKFFFSP) threads the bilayer. Over residues 1494–1510 (PTASEPDTTLTKTSPKN) the composition is skewed to polar residues. Disordered regions lie at residues 1494 to 1524 (PTAS…ESEA) and 1616 to 1637 (PETV…SICR). Position 2080 is a phosphothreonine (T2080). 4 disordered regions span residues 2219–2245 (FITS…DDIP), 2859–2919 (TSAT…PTVL), 3017–3053 (EDTK…STSS), and 3327–3403 (FDKS…QEVP). Residues 2232 to 2245 (ADDESDDDDDDDIP) are compositionally biased toward acidic residues. The span at 2866–2887 (LSDSSSSSSSSPGQTPQSPSLL) shows a compositional bias: low complexity. Positions 2888–2897 (SKRKKVKMKR) are enriched in basic residues. Basic and acidic residues-rich tracts occupy residues 3017-3037 (EDTK…EPEK), 3327-3341 (FDKS…EQHP), and 3370-3403 (LSEK…QEVP). The 370-residue stretch at 3627–3996 (SGGDPTYAFN…IHYREDPLSG (370 aa)) folds into the HECT domain. C3964 acts as the Glycyl thioester intermediate in catalysis.

The protein localises to the membrane. It carries out the reaction S-ubiquitinyl-[E2 ubiquitin-conjugating enzyme]-L-cysteine + [acceptor protein]-L-lysine = [E2 ubiquitin-conjugating enzyme]-L-cysteine + N(6)-ubiquitinyl-[acceptor protein]-L-lysine.. Its pathway is protein modification; protein ubiquitination. E3 ubiquitin-protein ligase which accepts ubiquitin from an E2 ubiquitin-conjugating enzyme in the form of a thioester and then directly transfers the ubiquitin to targeted substrates. The polypeptide is Probable E3 ubiquitin-protein ligase HECTD4 (HECTD4) (Homo sapiens (Human)).